Consider the following 479-residue polypeptide: MEAGCEGSSPQTLGERTMGEEGERVKPFTPEKAKEVIMSLQQPAIFCNMVFDWPSRHWTAKHLSKVLEGKQIRFRMGLRSTGTVPQFETECSYVDATLEEFLAWNCDQSRISGPFKKYDHSKFWAYADYKYFVTLFEDKTDVFQEVMWSDFGFPGRNGQESTLWIGSLGAHTPCHLDSYGCNLVFQVQGRKRWHLFPPEDTPFLYPTRIPYEESSVFSKINVVNPDLKRFPQFQKARRHMVTLSPGQVLFVPRHWWHYVESLDPVTVSINSWIELEEDHLARVEEAVTRMLVCTLKTAEDPHHPRTWLNPTEVEETSHEVNSCYLNSAVCAFFDHCERAKEVEMQAPRANGEEPGVQEHMEVEQARDPSSDVGAGKQEAASPFGPDLVPVTPASEERGGALEGDSQECTSRNGEHCAELPCARRQQASKGARAEAGQSAPRYPVAPSRVFVSTDDLLDCLVNPQVTRMVAQLLIQGKSL.

The tract at residues 1-25 is disordered; that stretch reads MEAGCEGSSPQTLGERTMGEEGERV. The segment at 88–208 is interaction with HSPB1; that stretch reads ETECSYVDAT…EDTPFLYPTR (121 aa). In terms of domain architecture, JmjC spans 124 to 288; that stretch reads WAYADYKYFV…HLARVEEAVT (165 aa). The segment at 347–412 is disordered; it reads PRANGEEPGV…GDSQECTSRN (66 aa). A compositionally biased stretch (basic and acidic residues) spans 356–369; sequence VQEHMEVEQARDPS.

Interacts with CRYAB and HSPB1. As to expression, widely expressed. Highly expressed by Sertoli cells in testis (at protein level).

The protein localises to the cytoplasm. Its function is as follows. May play a role in cellular stress response. The protein is HSPB1-associated protein 1 (Hspbap1) of Rattus norvegicus (Rat).